The following is a 181-amino-acid chain: Oligoribonuclease (181 aa).

The Exonuclease domain maps to 8–171 (LIWLDLEMTG…DDIKESIAEL (164 aa)). Tyr129 is a catalytic residue.

It belongs to the oligoribonuclease family.

The protein resides in the cytoplasm. 3'-to-5' exoribonuclease specific for small oligoribonucleotides. In Colwellia psychrerythraea (strain 34H / ATCC BAA-681) (Vibrio psychroerythus), this protein is Oligoribonuclease.